The sequence spans 246 residues: Probable phosphatase PBPRB2022 (246 aa).

Zn(2+) is bound by residues His8, His10, His16, His41, Glu74, His102, His132, Asp193, and His195.

This sequence belongs to the PHP family. Zn(2+) serves as cofactor.

This chain is Probable phosphatase PBPRB2022, found in Photobacterium profundum (strain SS9).